The chain runs to 221 residues: Small ribosomal subunit protein eS1 (221 aa).

Belongs to the eukaryotic ribosomal protein eS1 family.

This chain is Small ribosomal subunit protein eS1, found in Pyrobaculum aerophilum (strain ATCC 51768 / DSM 7523 / JCM 9630 / CIP 104966 / NBRC 100827 / IM2).